Here is a 709-residue protein sequence, read N- to C-terminus: Protein IMPAIRED IN BABA-INDUCED STERILITY 1 (709 aa).

The N-myristoyl glycine moiety is linked to residue glycine 2. The interval 53–80 (SGKKSSSKKSGSELGSDFGELSESGRAS) is disordered. One can recognise a Protein kinase domain in the interval 131–418 (FEKLEKIGQG…ASTALVSQYF (288 aa)). ATP-binding positions include 137-145 (IGQGTYSSV) and lysine 160. Aspartate 255 functions as the Proton acceptor in the catalytic mechanism. 2 disordered regions span residues 434-536 (SPSK…PFSG) and 566-609 (SRGH…QDRE). Basic and acidic residues predominate over residues 437 to 449 (KEIDAKHREDTTR). A compositionally biased stretch (basic residues) spans 484–494 (HSQKFQKRNGH). Positions 495-505 (SVHNSIDSDST) are enriched in polar residues. Basic and acidic residues-rich tracts occupy residues 509–523 (KMQKPSNHEKDEASH) and 586–609 (VDSKNNEKEKEEKHGERTDSQDRE).

The protein belongs to the protein kinase superfamily. Ser/Thr protein kinase family.

Required for beta-aminobutyric acid (BABA)-induced resistance (BABA-IR) against bacteria (e.g. P.syringae) and oomycetes (e.g. H.parasitica) via priming for salicylate (SA)-dependent defense responses such as pathogenesis-related PR-1 gene expression and trailing necrosis. Involved in BABA-mediated sterility. Necessary for the inheritance of BABA-priming to next generation, especially for the primed to be primed phenotype which consists in an enhanced second BABA-priming in transgenerationally primed plants. The protein is Protein IMPAIRED IN BABA-INDUCED STERILITY 1 of Arabidopsis thaliana (Mouse-ear cress).